The primary structure comprises 101 residues: Small ribosomal subunit protein uS10 (101 aa).

Belongs to the universal ribosomal protein uS10 family. As to quaternary structure, part of the 30S ribosomal subunit.

Involved in the binding of tRNA to the ribosomes. In Amoebophilus asiaticus (strain 5a2), this protein is Small ribosomal subunit protein uS10.